Reading from the N-terminus, the 252-residue chain is Small ribosomal subunit protein uS3 (252 aa).

Residues 39 to 111 (IRKLINNFAK…DVNLNVLEVK (73 aa)) enclose the KH type-2 domain. The segment at 226 to 252 (SQSSNNPNRRPRNFKGGNNNHVNAKKN) is disordered.

This sequence belongs to the universal ribosomal protein uS3 family. In terms of assembly, part of the 30S ribosomal subunit. Forms a tight complex with proteins S10 and S14.

Binds the lower part of the 30S subunit head. Binds mRNA in the 70S ribosome, positioning it for translation. In Aster yellows witches'-broom phytoplasma (strain AYWB), this protein is Small ribosomal subunit protein uS3.